Here is a 368-residue protein sequence, read N- to C-terminus: Heme A synthase (368 aa).

Transmembrane regions (helical) follow at residues 14-34 (AVRI…LVGG), 104-124 (VIGI…AIGP), 129-149 (ALWI…WMVA), 161-181 (VRLA…VWTL), and 200-220 (ALAL…VAGL). Histidine 264 is a binding site for heme. Transmembrane regions (helical) follow at residues 266-283 (MLAY…IDAL), 296-316 (FLAL…AAPI), and 318-338 (LALV…LQAE). Histidine 322 is a heme binding site.

Belongs to the COX15/CtaA family. Type 2 subfamily. Interacts with CtaB. Requires heme b as cofactor.

Its subcellular location is the cell membrane. The enzyme catalyses Fe(II)-heme o + 2 A + H2O = Fe(II)-heme a + 2 AH2. It functions in the pathway porphyrin-containing compound metabolism; heme A biosynthesis; heme A from heme O: step 1/1. In terms of biological role, catalyzes the conversion of heme O to heme A by two successive hydroxylations of the methyl group at C8. The first hydroxylation forms heme I, the second hydroxylation results in an unstable dihydroxymethyl group, which spontaneously dehydrates, resulting in the formyl group of heme A. This Rhodopseudomonas palustris (strain ATCC BAA-98 / CGA009) protein is Heme A synthase.